The sequence spans 508 residues: Phenylacetaldehyde synthase (508 aa).

Residues His-203 and His-318 each contribute to the L-phenylalanine site. At Lys-319 the chain carries N6-(pyridoxal phosphate)lysine. Phe-348 is a binding site for L-phenylalanine.

It belongs to the group II decarboxylase family. Homotetramer. Pyridoxal 5'-phosphate is required as a cofactor.

It carries out the reaction L-phenylalanine + O2 + H2O + H(+) = 2-phenylacetaldehyde + H2O2 + NH4(+) + CO2. Its function is as follows. Bifunctional enzyme that catalyzes the decarboxylation of L-phenylalanine to produce 2-phenylethylamine, which is then oxidized to form 2-phenylacetaldehyde, a constituent of floral scent in petals. 2-phenylacetaldehyde is a precursor of 2-phenylethanol, another constituent of floral scent in petals. In Rosa hybrid cultivar, this protein is Phenylacetaldehyde synthase.